Consider the following 89-residue polypeptide: Small ribosomal subunit protein uS15 (89 aa).

Belongs to the universal ribosomal protein uS15 family. Part of the 30S ribosomal subunit. Forms a bridge to the 50S subunit in the 70S ribosome, contacting the 23S rRNA.

Its function is as follows. One of the primary rRNA binding proteins, it binds directly to 16S rRNA where it helps nucleate assembly of the platform of the 30S subunit by binding and bridging several RNA helices of the 16S rRNA. Functionally, forms an intersubunit bridge (bridge B4) with the 23S rRNA of the 50S subunit in the ribosome. In Pectobacterium carotovorum subsp. carotovorum (strain PC1), this protein is Small ribosomal subunit protein uS15.